The chain runs to 928 residues: BCAS3 microtubule associated cell migration factor (928 aa).

Residue Met1 is modified to N-acetylmethionine. A WD repeat occupies 69 to 114; that stretch reads DLNDTSRNLEFHEIHSTGNEPPLLIMIGYSDGMQVWSIPISGEAQE. Lys215 is covalently cross-linked (Glycyl lysine isopeptide (Lys-Gly) (interchain with G-Cter in SUMO1); alternate). A Glycyl lysine isopeptide (Lys-Gly) (interchain with G-Cter in SUMO2); alternate cross-link involves residue Lys215. Required for recruitment to preautophagosomal structure in response to mitophagy regions lie at residues 254-312 and 437-560; these read RGGA…SRRS and YGGQ…IKAP. Phosphoserine occurs at positions 461, 480, and 488. Disordered regions lie at residues 472-515 and 755-777; these read TSKQ…PGNP and TTVI…PQPL. Low complexity-rich tracts occupy residues 480–494, 505–514, and 755–771; these read SPVP…GSPL, NNFTNNNPGN, and TTVI…HGPS. Phosphoserine is present on residues Ser838, Ser886, and Ser898. The segment at 868-928 is disordered; that stretch reads ESPSRDVVGS…PLSLFPTGFP (61 aa). The span at 887–901 shows a compositional bias: low complexity; the sequence is IETLSNSSGSTSGSI.

This sequence belongs to the BCAS3 family. In terms of assembly, interacts with histone H3, ESR1, KAT2B and PELP1; the interactions occur in a estrogen-dependent manner. Interacts with beta-tubulin and VIM. Interacts (via C-terminal) with PHAF1; the interaction is requrired for the association with the phagophore. Expressed in stomach, liver, lung, kidney, prostate, testis, thyroid gland, adrenal gland, brain, heart, skeletal muscle, colon, spleen, small intestine, placenta, blood leukocyte and mammary epithelial cells. Expressed in undifferentiated ES cells. Expressed in blood islands and nascent blood vessels derived from differentiated ES cells into embryoid bodies (BD). Expressed in endothelial cells. Not detected in brain. Expressed in brain tumors (at protein level). Expressed in brain. Highly expressed in breast cancers and in glioma cell lines.

The protein resides in the nucleus. Its subcellular location is the cytoplasm. It is found in the cytoskeleton. It localises to the preautophagosomal structure. In terms of biological role, plays a role in angiogenesis. Participates in the regulation of cell polarity and directional endothelial cell migration by mediating both the activation and recruitment of CDC42 and the reorganization of the actin cytoskeleton at the cell leading edge. Promotes filipodia formation. Functions synergistically with PELP1 as a transcriptional coactivator of estrogen receptor-responsive genes. Stimulates histone acetyltransferase activity. Binds to chromatin. Plays a regulatory role in autophagic activity. In complex with PHAF1, associates with the preautophagosomal structure during both non-selective and selective autophagy. Probably binds phosphatidylinositol 3-phosphate (PtdIns3P) which would mediate the recruitment preautophagosomal structures. In Homo sapiens (Human), this protein is BCAS3 microtubule associated cell migration factor.